The sequence spans 670 residues: ATP-dependent DNA helicase Rep (670 aa).

The UvrD-like helicase ATP-binding domain occupies 1 to 277 (MLFNEHQKKA…IIMQHNYRSS (277 aa)). Residues 22–29 (AGAGSGKT) and Arg-275 each bind ATP. Positions 278–562 (GRILKVANAL…QLMTLHASKG (285 aa)) constitute a UvrD-like helicase C-terminal domain.

It belongs to the helicase family. UvrD subfamily. Homodimer.

It catalyses the reaction Couples ATP hydrolysis with the unwinding of duplex DNA by translocating in the 3'-5' direction.. The enzyme catalyses ATP + H2O = ADP + phosphate + H(+). In terms of biological role, rep helicase is a single-stranded DNA-dependent ATPase involved in DNA replication; it can initiate unwinding at a nick in the DNA. It binds to the single-stranded DNA and acts in a progressive fashion along the DNA in the 3' to 5' direction. This Buchnera aphidicola subsp. Baizongia pistaciae (strain Bp) protein is ATP-dependent DNA helicase Rep.